Reading from the N-terminus, the 217-residue chain is Large ribosomal subunit protein uL3 (217 aa).

Residues Ser129–Met161 are disordered. Residues Ala142–Gly153 show a composition bias toward low complexity.

It belongs to the universal ribosomal protein uL3 family. In terms of assembly, part of the 50S ribosomal subunit. Forms a cluster with proteins L14 and L19.

Its function is as follows. One of the primary rRNA binding proteins, it binds directly near the 3'-end of the 23S rRNA, where it nucleates assembly of the 50S subunit. This Prochlorococcus marinus subsp. pastoris (strain CCMP1986 / NIES-2087 / MED4) protein is Large ribosomal subunit protein uL3.